The primary structure comprises 328 residues: tRNA U34 carboxymethyltransferase (328 aa).

Carboxy-S-adenosyl-L-methionine is bound by residues Lys-91, Trp-105, Lys-110, Gly-130, 152 to 154 (DPS), Met-196, Tyr-200, and Arg-315.

Belongs to the class I-like SAM-binding methyltransferase superfamily. CmoB family. Homotetramer.

The enzyme catalyses carboxy-S-adenosyl-L-methionine + 5-hydroxyuridine(34) in tRNA = 5-carboxymethoxyuridine(34) in tRNA + S-adenosyl-L-homocysteine + H(+). In terms of biological role, catalyzes carboxymethyl transfer from carboxy-S-adenosyl-L-methionine (Cx-SAM) to 5-hydroxyuridine (ho5U) to form 5-carboxymethoxyuridine (cmo5U) at position 34 in tRNAs. This chain is tRNA U34 carboxymethyltransferase, found in Psychromonas ingrahamii (strain DSM 17664 / CCUG 51855 / 37).